The following is a 370-amino-acid chain: GTPase Obg (370 aa).

One can recognise an Obg domain in the interval 1 to 159 (MKFIDEARIE…RMVRLELKVL (159 aa)). Residues 127-147 (NLHFKSSTNRAPRQKTDGKPG) are disordered. One can recognise an OBG-type G domain in the interval 160–334 (ADVGLLGMPN…LCYAVYDYLA (175 aa)). GTP-binding positions include 166 to 173 (GMPNAGKS), 191 to 195 (FTTLA), 213 to 216 (DIPG), 284 to 287 (NKLD), and 315 to 317 (SAL). 2 residues coordinate Mg(2+): Ser-173 and Thr-193.

This sequence belongs to the TRAFAC class OBG-HflX-like GTPase superfamily. OBG GTPase family. Monomer. Mg(2+) is required as a cofactor.

The protein localises to the cytoplasm. In terms of biological role, an essential GTPase which binds GTP, GDP and possibly (p)ppGpp with moderate affinity, with high nucleotide exchange rates and a fairly low GTP hydrolysis rate. Plays a role in control of the cell cycle, stress response, ribosome biogenesis and in those bacteria that undergo differentiation, in morphogenesis control. The protein is GTPase Obg of Paraburkholderia phymatum (strain DSM 17167 / CIP 108236 / LMG 21445 / STM815) (Burkholderia phymatum).